The following is a 190-amino-acid chain: Glycerol-3-phosphate acyltransferase 2 (190 aa).

5 consecutive transmembrane segments (helical) span residues 1 to 21, 53 to 73, 76 to 96, 110 to 130, and 152 to 172; these read MNILTLILSYLIGSISFALIV, VIVAIADILKGTFACLLPLIL, TINPIVCGLLAILGHIFSVFA, VFLFLSPLGVLVGFVVFVLTL, and LIFEDKVIIALSLLIIVSIII.

This sequence belongs to the PlsY family. Probably interacts with PlsX.

Its subcellular location is the cell membrane. It carries out the reaction an acyl phosphate + sn-glycerol 3-phosphate = a 1-acyl-sn-glycero-3-phosphate + phosphate. The protein operates within lipid metabolism; phospholipid metabolism. Functionally, catalyzes the transfer of an acyl group from acyl-phosphate (acyl-PO(4)) to glycerol-3-phosphate (G3P) to form lysophosphatidic acid (LPA). This enzyme utilizes acyl-phosphate as fatty acyl donor, but not acyl-CoA or acyl-ACP. In Bacillus anthracis, this protein is Glycerol-3-phosphate acyltransferase 2.